Consider the following 107-residue polypeptide: ATP-dependent Clp protease adapter protein ClpS (107 aa).

It belongs to the ClpS family. Binds to the N-terminal domain of the chaperone ClpA.

Involved in the modulation of the specificity of the ClpAP-mediated ATP-dependent protein degradation. In Acinetobacter baylyi (strain ATCC 33305 / BD413 / ADP1), this protein is ATP-dependent Clp protease adapter protein ClpS.